A 326-amino-acid polypeptide reads, in one-letter code: MALSGSTPAPCWEEDECLDYYGMLSLHRMFEVVGGQLTECELELLAFLLDEAPGAAGGLARARSGLELLLELERRGQCDESNLRLLGQLLRVLARHDLLPHLARKRRRPVSPERYSYGTSSSSKRTEGSCRRRRQSSSSANSQQGQWETGSPPTKRQRRSRGRPSGGARRRRRGAPAAPQQQSEPARPSSEGKVTCDIRLRVRAEYCEHGPALEQGVASRRPQALARQLDVFGQATAVLRSRDLGSVVCDIKFSELSYLDAFWGDYLSGALLQALRGVFLTEALREAVGREAVRLLVSVDEADYEAGRRRLLLMEEEGGRRPTEAS.

Residues 25–104 form the DED domain; that stretch reads SLHRMFEVVG…RHDLLPHLAR (80 aa). The short motif at 104-109 is the Nuclear localization signal element; it reads RKRRRP. The interval 104-194 is disordered; that stretch reads RKRRRPVSPE…PARPSSEGKV (91 aa). Residues 136 to 146 show a composition bias toward low complexity; it reads SSSSANSQQGQ. The Bipartite nuclear localization signal motif lies at 155–173; the sequence is KRQRRSRGRPSGGARRRRR. Basic residues predominate over residues 155 to 174; it reads KRQRRSRGRPSGGARRRRRG. A compositionally biased stretch (low complexity) spans 175–191; sequence APAAPQQQSEPARPSSE.

In terms of assembly, interacts with CASP8, CASP10 and GTF3C3. Homodimerizes and heterodimerizes with DEDD. As to expression, expressed in most tissues. High levels were found in liver, kidney, heart, ovary, spleen, testes, skeletal muscle and peripheral blood leukocytes. Expression was absent or low in colon and small intestine. Expression is relatively high in the tumor cell lines chronic myologenous leukemia K-562 and the colorectal adenocarcinoma SW480. Expression is moderate in the cervical carcinoma HeLa, the Burkitt's lymphoma Raji, the lung carcinoma A-549, and the melanoma G-361. In contrast, two leukemia cell lines, HL-60 (promyelocytic leukemia) and MOLT-4 (lymphoblastic leukemia), show relatively low levels.

It is found in the nucleus. The protein localises to the nucleolus. Functionally, may play a critical role in death receptor-induced apoptosis and may target CASP8 and CASP10 to the nucleus. May regulate degradation of intermediate filaments during apoptosis. May play a role in the general transcription machinery in the nucleus and might be an important regulator of the activity of GTF3C3. This Homo sapiens (Human) protein is DNA-binding death effector domain-containing protein 2 (DEDD2).